We begin with the raw amino-acid sequence, 633 residues long: 1-deoxy-D-xylulose-5-phosphate synthase (633 aa).

Thiamine diphosphate is bound by residues histidine 72 and 113–115 (GHS). Mg(2+) is bound at residue aspartate 144. Residues 145 to 146 (GA), asparagine 173, tyrosine 284, and glutamate 367 each bind thiamine diphosphate. Asparagine 173 is a Mg(2+) binding site.

The protein belongs to the transketolase family. DXPS subfamily. Homodimer. The cofactor is Mg(2+). It depends on thiamine diphosphate as a cofactor.

It carries out the reaction D-glyceraldehyde 3-phosphate + pyruvate + H(+) = 1-deoxy-D-xylulose 5-phosphate + CO2. It participates in metabolic intermediate biosynthesis; 1-deoxy-D-xylulose 5-phosphate biosynthesis; 1-deoxy-D-xylulose 5-phosphate from D-glyceraldehyde 3-phosphate and pyruvate: step 1/1. Functionally, catalyzes the acyloin condensation reaction between C atoms 2 and 3 of pyruvate and glyceraldehyde 3-phosphate to yield 1-deoxy-D-xylulose-5-phosphate (DXP). In Lysinibacillus sphaericus (strain C3-41), this protein is 1-deoxy-D-xylulose-5-phosphate synthase.